The chain runs to 303 residues: Coenzyme PQQ synthesis protein B (303 aa).

This sequence belongs to the PqqB family.

Its pathway is cofactor biosynthesis; pyrroloquinoline quinone biosynthesis. Its function is as follows. May be involved in the transport of PQQ or its precursor to the periplasm. This chain is Coenzyme PQQ synthesis protein B, found in Acinetobacter baumannii (strain AYE).